The primary structure comprises 691 residues: Two-component response regulator ORR21 (691 aa).

The region spanning 17–132 (KVLVVDDDPT…ELKNIWQHVI (116 aa)) is the Response regulatory domain. A 4-aspartylphosphate modification is found at aspartate 68. Over residues 139 to 155 (NKEHEHSGSLDDTDRTR) the composition is skewed to basic and acidic residues. A disordered region spans residues 139–204 (NKEHEHSGSL…DPSSTSKKPR (66 aa)). Residues 199 to 258 (TSKKPRVVWSVELHQQFVNAVNHLGIDKAVPKKILELMNVPGLTRENVASHLQKFRLYLK) constitute a DNA-binding region (myb-like GARP).

It belongs to the ARR family. Type-B subfamily. Post-translationally, two-component system major event consists of a His-to-Asp phosphorelay between a sensor histidine kinase (HK) and a response regulator (RR). In plants, the His-to-Asp phosphorelay involves an additional intermediate named Histidine-containing phosphotransfer protein (HPt). This multistep phosphorelay consists of a His-Asp-His-Asp sequential transfer of a phosphate group between first a His and an Asp of the HK protein, followed by the transfer to a conserved His of the HPt protein and finally the transfer to an Asp in the receiver domain of the RR protein.

It is found in the nucleus. Its function is as follows. Transcriptional activator that binds specific DNA sequence. Functions as a response regulator involved in His-to-Asp phosphorelay signal transduction system. Phosphorylation of the Asp residue in the receiver domain activates the ability of the protein to promote the transcription of target genes. May directly activate some type-A response regulators in response to cytokinins. This Oryza sativa subsp. japonica (Rice) protein is Two-component response regulator ORR21.